We begin with the raw amino-acid sequence, 454 residues long: Bifunctional protein GlmU (454 aa).

Residues 1 to 227 (MSKLSVVILA…MMEVEGANNR (227 aa)) are pyrophosphorylase. Residues 9–12 (LAAG), K23, Q74, 79–80 (GT), 101–103 (YGD), G138, E152, N167, and N225 contribute to the UDP-N-acetyl-alpha-D-glucosamine site. D103 is a binding site for Mg(2+). N225 lines the Mg(2+) pocket. The tract at residues 228–248 (LQLAALERYFQRKQATALLLA) is linker. The N-acetyltransferase stretch occupies residues 249-454 (GVSLADPERF…ADWERPSKKK (206 aa)). 2 residues coordinate UDP-N-acetyl-alpha-D-glucosamine: R331 and K349. The active-site Proton acceptor is the H361. Y364 and N375 together coordinate UDP-N-acetyl-alpha-D-glucosamine. Acetyl-CoA contacts are provided by residues A378, 384–385 (NY), S403, A421, and R438.

It in the N-terminal section; belongs to the N-acetylglucosamine-1-phosphate uridyltransferase family. The protein in the C-terminal section; belongs to the transferase hexapeptide repeat family. As to quaternary structure, homotrimer. Requires Mg(2+) as cofactor.

The protein resides in the cytoplasm. It catalyses the reaction alpha-D-glucosamine 1-phosphate + acetyl-CoA = N-acetyl-alpha-D-glucosamine 1-phosphate + CoA + H(+). The catalysed reaction is N-acetyl-alpha-D-glucosamine 1-phosphate + UTP + H(+) = UDP-N-acetyl-alpha-D-glucosamine + diphosphate. Its pathway is nucleotide-sugar biosynthesis; UDP-N-acetyl-alpha-D-glucosamine biosynthesis; N-acetyl-alpha-D-glucosamine 1-phosphate from alpha-D-glucosamine 6-phosphate (route II): step 2/2. It functions in the pathway nucleotide-sugar biosynthesis; UDP-N-acetyl-alpha-D-glucosamine biosynthesis; UDP-N-acetyl-alpha-D-glucosamine from N-acetyl-alpha-D-glucosamine 1-phosphate: step 1/1. The protein operates within bacterial outer membrane biogenesis; LPS lipid A biosynthesis. Functionally, catalyzes the last two sequential reactions in the de novo biosynthetic pathway for UDP-N-acetylglucosamine (UDP-GlcNAc). The C-terminal domain catalyzes the transfer of acetyl group from acetyl coenzyme A to glucosamine-1-phosphate (GlcN-1-P) to produce N-acetylglucosamine-1-phosphate (GlcNAc-1-P), which is converted into UDP-GlcNAc by the transfer of uridine 5-monophosphate (from uridine 5-triphosphate), a reaction catalyzed by the N-terminal domain. In Actinobacillus succinogenes (strain ATCC 55618 / DSM 22257 / CCUG 43843 / 130Z), this protein is Bifunctional protein GlmU.